Reading from the N-terminus, the 207-residue chain is Thiamine-phosphate synthase (207 aa).

4-amino-2-methyl-5-(diphosphooxymethyl)pyrimidine contacts are provided by residues 38–42 (QYRAK) and Asn-70. Asp-71 and Asp-90 together coordinate Mg(2+). Residue Thr-109 participates in 4-amino-2-methyl-5-(diphosphooxymethyl)pyrimidine binding. Position 135–137 (135–137 (TNS)) interacts with 2-[(2R,5Z)-2-carboxy-4-methylthiazol-5(2H)-ylidene]ethyl phosphate. Lys-138 contacts 4-amino-2-methyl-5-(diphosphooxymethyl)pyrimidine. Residues Gly-165 and 185-186 (IS) each bind 2-[(2R,5Z)-2-carboxy-4-methylthiazol-5(2H)-ylidene]ethyl phosphate.

It belongs to the thiamine-phosphate synthase family. Mg(2+) is required as a cofactor.

It carries out the reaction 2-[(2R,5Z)-2-carboxy-4-methylthiazol-5(2H)-ylidene]ethyl phosphate + 4-amino-2-methyl-5-(diphosphooxymethyl)pyrimidine + 2 H(+) = thiamine phosphate + CO2 + diphosphate. The catalysed reaction is 2-(2-carboxy-4-methylthiazol-5-yl)ethyl phosphate + 4-amino-2-methyl-5-(diphosphooxymethyl)pyrimidine + 2 H(+) = thiamine phosphate + CO2 + diphosphate. It catalyses the reaction 4-methyl-5-(2-phosphooxyethyl)-thiazole + 4-amino-2-methyl-5-(diphosphooxymethyl)pyrimidine + H(+) = thiamine phosphate + diphosphate. It participates in cofactor biosynthesis; thiamine diphosphate biosynthesis; thiamine phosphate from 4-amino-2-methyl-5-diphosphomethylpyrimidine and 4-methyl-5-(2-phosphoethyl)-thiazole: step 1/1. Condenses 4-methyl-5-(beta-hydroxyethyl)thiazole monophosphate (THZ-P) and 2-methyl-4-amino-5-hydroxymethyl pyrimidine pyrophosphate (HMP-PP) to form thiamine monophosphate (TMP). This Clostridium perfringens (strain 13 / Type A) protein is Thiamine-phosphate synthase.